Here is a 590-residue protein sequence, read N- to C-terminus: MQTENQVNDLYPIAVLIDELKHDEITYRLNALERLSTIALALGPERTRDELIPFLDESIDDEDEVLSALADQLGNFVDYVGGPEYAHVLLSPLENLAATEETVVRDKAVDSLNKVCICLSQEQLEQYFVPLVQRLSTAEWFTSRASSAGLYCAAYSQSENPAVKVSLRQSFSHLCHDEAPMVRRPAATNCAKFVFLVTKQEAIDEFIPLFNSLSNDDQDSVRLLSFDIMVSLAEVLKSDSEIRHYLLQPLRSFVSDSSWRTRYMVAANFVKLAKVVGPSLIKDELIKPFVLLMKDTEQEVRRAIATQIPGFCELLDKRIVLEEIIPVIQELINDPAQHVRAALGMNIGALAPQLGKEKTTEYLLPMFLELLKDENPEVRLNIISKLEVVNKVVGIELLSQSLLPAIVTLAEDKQWRVRLAIIDYIPLLAQQLGVEFFNEKMGNLCMSWLEDHVYSIREAAIKNLRKLTEIFGLEWATETIIPKFLAMRSHPNYLYRMTTIFAISEIAPALNAEVIEKQILPTLEQLVNDPIPNIRFNVAKAFEVLKPVLAAGGDSTVYEQQIIPLLEQLTKDNDPDVQYFATQALEQTND.

HEAT repeat units follow at residues 12 to 50 (PIAV…TRDE), 89 to 127 (LLSP…LEQY), 206 to 244 (FIPL…EIRH), 246 to 284 (LLQP…IKDE), 285 to 323 (LIKP…VLEE), 324 to 362 (IIPV…TTEY), 363 to 401 (LLPM…LSQS), 402 to 440 (LLPA…FNEK), 480 to 518 (IIPK…IEKQ), 519 to 551 (ILPT…VLAA), and 562 to 590 (IIPL…QTND).

This sequence belongs to the phosphatase 2A regulatory subunit A family. PP2A exists in several trimeric forms, all of which consist of a core composed of a catalytic subunit associated with a 65 kDa (PR65) (Subunit A) and a 55 kDa (PR55) (Subunit B) regulatory subunit.

Its function is as follows. Phosphatase 2A affects a variety of biological processes in the cell such as transcription, cell cycle progression and cellular morphogenesis, and provides an initial identification of critical substrates for this phosphatase. The regulatory subunit may direct the catalytic subunit to distinct, albeit overlapping, subsets of substrates. The sequence is that of Protein phosphatase PP2A regulatory subunit A (paa1) from Schizosaccharomyces pombe (strain 972 / ATCC 24843) (Fission yeast).